Consider the following 96-residue polypeptide: Putative septation protein SpoVG (96 aa).

Belongs to the SpoVG family.

Its function is as follows. Could be involved in septation. The chain is Putative septation protein SpoVG from Phytoplasma australiense.